The primary structure comprises 448 residues: Homogentisate 1,2-dioxygenase (448 aa).

Fe cation-binding residues include histidine 340, glutamate 346, and histidine 377.

Belongs to the homogentisate dioxygenase family. Requires Fe cation as cofactor.

It catalyses the reaction homogentisate + O2 = 4-maleylacetoacetate + H(+). It participates in amino-acid degradation; L-phenylalanine degradation; acetoacetate and fumarate from L-phenylalanine: step 4/6. In Emericella nidulans (strain FGSC A4 / ATCC 38163 / CBS 112.46 / NRRL 194 / M139) (Aspergillus nidulans), this protein is Homogentisate 1,2-dioxygenase (hmgA).